The primary structure comprises 90 residues: MLEELKEEEIVNKIGGRFKLSTLIQKRLVQLNQGSRALVSVDTHDKMSIVLQEIVQDKIFLNMENEIETVDDLDAIVAASEAPELDPSDL.

The protein belongs to the RNA polymerase subunit omega family. The RNAP catalytic core consists of 2 alpha, 1 beta, 1 beta' and 1 omega subunit. When a sigma factor is associated with the core the holoenzyme is formed, which can initiate transcription.

It carries out the reaction RNA(n) + a ribonucleoside 5'-triphosphate = RNA(n+1) + diphosphate. Promotes RNA polymerase assembly. Latches the N- and C-terminal regions of the beta' subunit thereby facilitating its interaction with the beta and alpha subunits. This Rhodopirellula baltica (strain DSM 10527 / NCIMB 13988 / SH1) protein is DNA-directed RNA polymerase subunit omega.